A 649-amino-acid chain; its full sequence is Threonine--tRNA ligase (649 aa).

The region spanning 1 to 60 (MHVTLPDGKQLDLQPGATALDAAKAIGPRLAQDALGATANGELTDLMTPLSDGASITLIT) is the TGS domain. The interval 248-544 (DHRKLGKELE…LIEHYAGDFP (297 aa)) is catalytic. Residues C341, H392, and H521 each coordinate Zn(2+).

It belongs to the class-II aminoacyl-tRNA synthetase family. Homodimer. The cofactor is Zn(2+).

It localises to the cytoplasm. The enzyme catalyses tRNA(Thr) + L-threonine + ATP = L-threonyl-tRNA(Thr) + AMP + diphosphate + H(+). Functionally, catalyzes the attachment of threonine to tRNA(Thr) in a two-step reaction: L-threonine is first activated by ATP to form Thr-AMP and then transferred to the acceptor end of tRNA(Thr). Also edits incorrectly charged L-seryl-tRNA(Thr). This Deinococcus radiodurans (strain ATCC 13939 / DSM 20539 / JCM 16871 / CCUG 27074 / LMG 4051 / NBRC 15346 / NCIMB 9279 / VKM B-1422 / R1) protein is Threonine--tRNA ligase.